Reading from the N-terminus, the 1053-residue chain is 3-hydroxy-3-methylglutaryl-coenzyme A reductase (1053 aa).

The Cytoplasmic segment spans residues 1–8; sequence MIYKLAAR. The chain crosses the membrane as a helical span at residues 9–29; sequence YPIQVIAIVGILVSMAYFSFL. Residues 30 to 203 lie on the Lumenal side of the membrane; that stretch reads EALTQEDFPV…LKIASQASKT (174 aa). Residue Asn137 is glycosylated (N-linked (GlcNAc...) asparagine). The helical transmembrane segment at 204–224 threads the bilayer; it reads ELLIVGTAYACMLISIVSLYL. Residues 204–365 form the SSD domain; it reads ELLIVGTAYA…FSFFVAILTL (162 aa). At 225 to 232 the chain is on the cytoplasmic side; it reads KMRRLGSK. Residues 233 to 253 form a helical membrane-spanning segment; that stretch reads FWLFFSVLLSTLFSVQFAMTL. Residues 254–258 lie on the Lumenal side of the membrane; that stretch reads VRASG. The helical transmembrane segment at 259–279 threads the bilayer; it reads VRISLVSLIESLPFLINVVAL. Over 280–320 the chain is Cytoplasmic; the sequence is DKAAELTRQVITRCSVSDSHSPMHEDIAKACRNAAPPILRH. 2 helical membrane passes run 321 to 341 and 342 to 362; these read FSFG…IKQF and FLFA…FVAI. Over 363 to 417 the chain is Cytoplasmic; the sequence is LTLKLEMRRYNAKDDVRKVLIEEGLSESTARHVADGNDSSATTSAGSRYFKVRYG. A helical transmembrane segment spans residues 418 to 438; sequence TKIILFIFIAFNLFELCSIPF. Over 439-526 the chain is Lumenal; it reads KHYAATSAAA…NNWSHYISAS (88 aa). Asn518 carries an N-linked (GlcNAc...) asparagine glycan. Residues 527–547 form a helical membrane-spanning segment; that stretch reads FLSKWIVCALSLSIAVNVFLL. Over 548-1053 the chain is Cytoplasmic; that stretch reads NAARLNSIKE…KSVNSRVPGR (506 aa). Glu712 acts as the Charge relay system in catalysis. 718–724 contributes to the CoA binding site; the sequence is STMRGCK. NADP(+)-binding positions include 779–781 and 806–814; these read SRF and DAMGMNMIS. The active-site Charge relay system is Lys846. Residue 875-877 coordinates CoA; the sequence is VLK. Residue Asp922 is the Charge relay system of the active site. A CoA-binding site is contributed by 1017–1018; the sequence is SH. The Proton donor role is filled by His1018. 1022 to 1023 lines the NADP(+) pocket; that stretch reads NR. Ser1024 bears the Phosphoserine mark. Thr1028 carries the post-translational modification Phosphothreonine. The interval 1028–1053 is disordered; the sequence is TPAMDSSAKKPATDALKSVNSRVPGR.

The protein belongs to the HMG-CoA reductase family.

The protein resides in the endoplasmic reticulum membrane. It localises to the nucleus envelope. The enzyme catalyses (R)-mevalonate + 2 NADP(+) + CoA = (3S)-3-hydroxy-3-methylglutaryl-CoA + 2 NADPH + 2 H(+). The protein operates within metabolic intermediate biosynthesis; (R)-mevalonate biosynthesis; (R)-mevalonate from acetyl-CoA: step 3/3. Part of the first module of ergosterol biosynthesis pathway that includes the early steps of the pathway, conserved across all eukaryotes, and which results in the formation of mevalonate from acetyl-coenzyme A (acetyl-CoA). Hmg1 catalyzes the reduction of hydroxymethylglutaryl-CoA (HMG-CoA) to mevalonate. The first module starts with the action of the cytosolic acetyl-CoA acetyltransferase eg10 that catalyzes the formation of acetoacetyl-CoA. The hydroxymethylglutaryl-CoA synthases erg13 then condenses acetyl-CoA with acetoacetyl-CoA to form HMG-CoA. The rate-limiting step of the early module is the reduction to mevalonate by the 3-hydroxy-3-methylglutaryl-coenzyme A (HMG-CoA) reductases hcs1. This Schizosaccharomyces pombe (strain 972 / ATCC 24843) (Fission yeast) protein is 3-hydroxy-3-methylglutaryl-coenzyme A reductase.